The primary structure comprises 238 residues: Probable transcriptional regulatory protein YeeN (238 aa).

Belongs to the TACO1 family. YeeN subfamily.

The protein localises to the cytoplasm. In Shigella flexneri, this protein is Probable transcriptional regulatory protein YeeN.